A 414-amino-acid polypeptide reads, in one-letter code: Nuclear localization sequence-binding protein (414 aa).

3 disordered regions span residues 1 to 172 (MAKT…TIFV), 244 to 264 (STSK…TPSE), and 336 to 414 (RPVR…KTFD). Positions 10-26 (NKKEVKASKQAKEEKAK) are enriched in basic and acidic residues. Low complexity-rich tracts occupy residues 27-44 (AVSS…SSSE) and 54-73 (ESSS…SSSD). Residues 78–87 (AETKKEESKD) show a composition bias toward basic and acidic residues. A phosphoserine mark is found at serine 93, serine 95, serine 96, serine 97, serine 116, serine 127, serine 129, serine 131, and serine 143. The segment covering 96–105 (SSDEEEEEEK) has biased composition (acidic residues). A compositionally biased stretch (basic and acidic residues) spans 106–117 (EETKKEESKESS). The span at 118–128 (SSDSSSSSSSD) shows a compositional bias: low complexity. Residues 134 to 144 (EESNDKKRKSE) are compositionally biased toward basic and acidic residues. RRM domains lie at 168–246 (ATIF…MSTS) and 267–345 (DTLF…FSSP). The span at 351–386 (GGRGGSRGFGGRGGGRGGNRGFGGRGGARGGRGGFR) shows a compositional bias: gly residues. Position 353 is an omega-N-methylarginine (arginine 353). The tract at residues 353-384 (RGGSRGFGGRGGGRGGNRGFGGRGGARGGRGG) is RGG-box. Asymmetric dimethylarginine; by HMT1; alternate is present on residues arginine 357, arginine 362, and arginine 366. Residues arginine 357, arginine 362, and arginine 366 each carry the omega-N-methylarginine; by HMT1; alternate modification. Positions 366-384 (RGGNRGFGGRGGARGGRGG) are RNA-binding RGG-box. At arginine 370 the chain carries Omega-N-methylarginine. Asymmetric dimethylarginine; by HMT1; alternate occurs at positions 375, 379, and 382. 3 positions are modified to omega-N-methylarginine; by HMT1; alternate: arginine 375, arginine 379, and arginine 382. Arginine 386 is modified (omega-N-methylarginine).

This sequence belongs to the RRM GAR family. Post-translationally, methylated by HMT1, forming asymmetric dimethylarginines (DMA) within a domain referred to as an RGG box, made up of repeated Gly-Gly dipeptides interspersed with Arg and aromatic residues. Pyrophosphorylated by 5-diphosphoinositol pentakisphosphate (5-IP7). Serine pyrophosphorylation is achieved by Mg(2+)-dependent, but enzyme independent transfer of a beta-phosphate from a inositol pyrophosphate to a pre-phosphorylated serine residue.

It localises to the nucleus. The protein resides in the nucleolus. Functionally, involved in pre-rRNA processing. Specifically binds nuclear localization sequences. Candidate for a receptor at the nucleus that may be involved in both RNA and protein transport. Binds telomeric sequences of the type (TG[1-3])n in vitro. The protein is Nuclear localization sequence-binding protein of Saccharomyces cerevisiae (strain ATCC 204508 / S288c) (Baker's yeast).